An 87-amino-acid polypeptide reads, in one-letter code: Large ribosomal subunit protein bL31B (87 aa).

The protein belongs to the bacterial ribosomal protein bL31 family. Type B subfamily. In terms of assembly, part of the 50S ribosomal subunit.

This is Large ribosomal subunit protein bL31B from Pseudomonas paraeruginosa (strain DSM 24068 / PA7) (Pseudomonas aeruginosa (strain PA7)).